The primary structure comprises 1978 residues: Sodium channel protein type 8 subunit alpha (1978 aa).

Disordered regions lie at residues 1–20 (MAARLLAPPGPDSFKPFTPE) and 28–62 (RIAESKLKKPPKADGSHREDDEDSKPKPNSDLEAG). Residues 1 to 132 (MAARLLAPPG…RIAIKILIHS (132 aa)) are Cytoplasmic-facing. Residues 28-61 (RIAESKLKKPPKADGSHREDDEDSKPKPNSDLEA) are compositionally biased toward basic and acidic residues. The I repeat unit spans residues 114–442 (ILSPFNLIRR…KAMLEQLKKQ (329 aa)). Residues 133–151 (VFSMIIMCTILTNCVFMTF) traverse the membrane as a helical segment. Residues 152–158 (SNPPEWS) lie on the Extracellular side of the membrane. A helical transmembrane segment spans residues 159-179 (KNVEYTFTGIYTFESLVKIIA). Residues 180 to 193 (RGFCIDGFTFLRDP) are Cytoplasmic-facing. A helical membrane pass occupies residues 194–211 (WNWLDFSVIMMAYVTEFV). Residues 212–217 (DLGNVS) lie on the Extracellular side of the membrane. Asparagine 215 carries N-linked (GlcNAc...) asparagine glycosylation. Residues 218-234 (ALRTFRVLRALKTISVI) traverse the membrane as a helical segment. The Cytoplasmic portion of the chain corresponds to 235–253 (PGLKTIVGALIQSVKKLSD). A helical transmembrane segment spans residues 254 to 273 (VMILTVFCLSVFALIGLQLF). Topologically, residues 274–355 (MGNLRNKCVV…PNYGYTSFDT (82 aa)) are extracellular. A disulfide bond links cysteine 281 and cysteine 333. N-linked (GlcNAc...) asparagine glycosylation is found at asparagine 289, asparagine 295, asparagine 308, and asparagine 326. Residues 356–380 (FSWAFLALFRLMTQDYWENLYQLTL) constitute an intramembrane region (pore-forming). Glutamate 373 provides a ligand contact to Na(+). Topologically, residues 381–387 (RAAGKTY) are extracellular. A helical transmembrane segment spans residues 388-408 (MIFFVLVIFVGSFYLVNLILA). Residues 409-751 (VVAMAYEEQN…EIVNLIVMDP (343 aa)) lie on the Cytoplasmic side of the membrane. Disordered stretches follow at residues 446–530 (AQAA…KAFR) and 576–597 (DPGSENEFADDEHSTVEESEGR). Positions 473-486 (SPRSSSELSKLSSK) are enriched in low complexity. Positions 489 to 500 (KERRNRRKKRKQ) are enriched in basic residues. Basic and acidic residues-rich tracts occupy residues 501–530 (KELSEGEEKGDPEKVFKSESEDGMRRKAFR) and 586–597 (DEHSTVEESEGR). A phosphoserine mark is found at serine 518 and serine 520. Residues 733–1005 (CHPYWIKLKE…QISVIRIKKG (273 aa)) form an II repeat. A helical transmembrane segment spans residues 752 to 770 (FVDLAITICIVLNTLFMAM). Over 771–781 (EHHPMTPQFEH) the chain is Extracellular. A helical transmembrane segment spans residues 782–801 (VLAVGNLVFTGIFTAEMFLK). At 802 to 815 (LIAMDPYYYFQEGW) the chain is on the cytoplasmic side. Residues 816 to 835 (NIFDGFIVSLSLMELSLADV) traverse the membrane as a helical segment. Residues 836–837 (EG) are Extracellular-facing. Residues 838–855 (LSVLRSFRLLRVFKLAKS) form a helical membrane-spanning segment. Over 856–871 (WPTLNMLIKIIGNSVG) the chain is Cytoplasmic. Residues 872–890 (ALGNLTLVLAIIVFIFAVV) traverse the membrane as a helical segment. Over 891–919 (GMQLFGKSYKECVCKINQECKLPRWHMND) the chain is Extracellular. Cysteine 904 and cysteine 910 are oxidised to a cystine. The pore-forming intramembrane region spans 920–940 (FFHSFLIVFRVLCGEWIETMW). Na(+) contacts are provided by glutamate 934 and glutamate 937. The Extracellular portion of the chain corresponds to 941 to 953 (DCMEVAGQAMCLI). A disulfide bridge links cysteine 942 with cysteine 951. Residues 954 to 974 (VFMMVMVIGNLVVLNLFLALL) traverse the membrane as a helical segment. The Cytoplasmic segment spans residues 975–1197 (LSSFSADNLA…TCFLIVEHNW (223 aa)). A disordered region spans residues 1105–1146 (NLNTEDVSSESDPEGSKDKLDDTSSSEGSTIDIKPEVEEVPV). An III repeat occupies 1178 to 1493 (LGKSWWILRK…KKYYNAMKKL (316 aa)). A helical membrane pass occupies residues 1198–1215 (FETFIIFMILLSSGALAF). Topologically, residues 1216–1228 (EDIYIEQRKTIRT) are extracellular. A helical membrane pass occupies residues 1229 to 1247 (ILEYADKVFTYIFILEMLL). The Cytoplasmic segment spans residues 1248 to 1261 (KWTAYGFVKFFTNA). The chain crosses the membrane as a helical span at residues 1262–1280 (WCWLDFLIVAVSLVSLIAN). The Extracellular segment spans residues 1281-1288 (ALGYSELG). The chain crosses the membrane as a helical span at residues 1289-1307 (AIKSLRTLRALRPLRALSR). The Cytoplasmic segment spans residues 1308–1324 (FEGMRVVVNALVGAIPS). The chain crosses the membrane as a helical span at residues 1325 to 1344 (IMNVLLVCLIFWLIFSIMGV). Residues 1345–1397 (NLFAGKYHYCFNETSEIRFEIDIVNNKTDCEKLMEGNSTEIRWKNVKINFDNV) lie on the Extracellular side of the membrane. Cysteine 1354 and cysteine 1374 are oxidised to a cystine. Residues asparagine 1356, asparagine 1370, and asparagine 1381 are each glycosylated (N-linked (GlcNAc...) asparagine). Residues 1398 to 1419 (GAGYLALLQVATFKGWMDIMYA) constitute an intramembrane region (pore-forming). Residues 1420-1436 (AVDSRKPDEQPDYEGNI) lie on the Extracellular side of the membrane. Residues 1437–1458 (YMYIYFVIFIIFGSFFTLNLFI) traverse the membrane as a helical segment. Topologically, residues 1459-1521 (GVIIDNFNQQ…IVFDFVTQQA (63 aa)) are cytoplasmic. The residue at position 1495 (serine 1495) is a Phosphoserine; by PKC. The IV repeat unit spans residues 1502–1799 (IPRPLNKIQG…WEKFDPDATQ (298 aa)). A helical membrane pass occupies residues 1522-1539 (FDIVIMMLICLNMVTMMV). Topologically, residues 1540-1550 (ETDTQSKQMEN) are extracellular. A helical transmembrane segment spans residues 1551–1569 (ILYWINLVFVIFFTCECVL). Topologically, residues 1570–1581 (KMFALRHYYFTI) are cytoplasmic. The helical transmembrane segment at 1582-1599 (GWNIFDFVVVILSIVGMF) threads the bilayer. The Extracellular segment spans residues 1600–1612 (LADIIEKYFVSPT). A helical transmembrane segment spans residues 1613-1629 (LFRVIRLARIGRILRLI). At 1630 to 1648 (KGAKGIRTLLFALMMSLPA) the chain is on the cytoplasmic side. A helical transmembrane segment spans residues 1649-1666 (LFNIGLLLFLVMFIFSIF). The Extracellular segment spans residues 1667-1688 (GMSNFAYVKHEAGIDDMFNFET). Residues 1689–1711 (FGNSMICLFQITTSAGWDGLLLP) constitute an intramembrane region (pore-forming). Residues 1712–1740 (ILNRPPDCSLDKEHPGSGFKGDCGNPSVG) are Extracellular-facing. A disulfide bridge connects residues cysteine 1719 and cysteine 1734. The chain crosses the membrane as a helical span at residues 1741-1763 (IFFFVSYIIISFLIVVNMYIAII). The Cytoplasmic portion of the chain corresponds to 1764–1978 (LENFSVATEE…RQKEVRESKC (215 aa)). An IQ domain is found at 1893–1922 (EEVSAVVLQRAYRGHLARRGFICRKMASNK). The disordered stretch occupies residues 1923–1978 (LENGGTHRDKKESTPSTASLPSYDSVTKPDKEKQQRAEEGRRERAKRQKEVRESKC). A compositionally biased stretch (polar residues) spans 1936-1947 (TPSTASLPSYDS). Basic and acidic residues predominate over residues 1949 to 1978 (TKPDKEKQQRAEEGRRERAKRQKEVRESKC).

The protein belongs to the sodium channel (TC 1.A.1.10) family. Nav1.6/SCN8A subfamily. As to quaternary structure, the voltage-sensitive sodium channel consists of an ion-conducting pore-forming alpha subunit regulated by one or more beta-1 (SCN1B), beta-2 (SCN2B), beta-3 (SCN3B) and/or beta-4 (SCN4B) subunits. Beta-1 (SCN1B) and beta-3 (SCN3B) are non-covalently associated with alpha, while beta-2 (SCN2B) and beta-4 (SCN4B) are covalently linked by disulfide bonds. Interacts with NEDD4 and NEDD4L. Interacts with FGF13. Interacts with FGF14, GBG3, GBB2 and SCN1B. Interacts with TMEM233. Interacts with the conotoxin GVIIJ. Interacts with CALM1; the interaction modulates the inactivation rate of SCN8A. May be ubiquitinated by NEDD4L; which would promote its endocytosis. Post-translationally, phosphorylation at Ser-1495 by PKC in a highly conserved cytoplasmic loop slows inactivation of the sodium channel and reduces peak sodium currents. Isoform 1 is highly expressed in brain, moderately in spinal cord, and at low levels in dorsal root ganglia, nodose ganglia and superior cervical ganglia. Not detected in sciatic nerve and non-neuronal tissues. Isoform 2 is hardly detectable, if at all, in brain, expressed at low levels in spinal cord and at highest levels in dorsal root ganglia.

Its subcellular location is the cell membrane. It is found in the cell projection. The protein localises to the axon. It carries out the reaction Na(+)(in) = Na(+)(out). Pore-forming subunit of a voltage-gated sodium channel complex assuming opened or closed conformations in response to the voltage difference across membranes and through which sodium ions selectively pass along their electrochemical gradient. Contributes to neuronal excitability by regulating action potential threshold and propagation. This is Sodium channel protein type 8 subunit alpha from Rattus norvegicus (Rat).